A 250-amino-acid chain; its full sequence is 26 kDa periplasmic immunogenic protein (250 aa).

The N-terminal stretch at 1–28 (MNTRASNFLAASFSTIMLVGAFSLPAFA) is a signal peptide.

It localises to the periplasm. The protein is 26 kDa periplasmic immunogenic protein (bp26) of Brucella melitensis biotype 1 (strain ATCC 23456 / CCUG 17765 / NCTC 10094 / 16M).